A 298-amino-acid chain; its full sequence is MRRYHKMEKIGEGTYGVVYKAQNNHGEICALKKIRVEEEDEGIPSTAIREISLLKELHHPNIVWLRDVIHSEKCLTLVFEYLDQDLKKLLDACDGGLEPTTAKSFLYQILRGISYCHDHRILHRDLKPQNLLINREGVLKLADFGLARAFAIPVRSYTHEVVTLWYRAPDVLMGSKKYSTAVDIWSVGCIFAEMINGVPLFPGISEQDQLKRIFKILGTPNVDSWPQVVNLPAYNPDFCYYEKQAWSSIVPKLNESGIDLISRMLQLDPVQRISAKEALKHDYFKDLHRPSEFLNGVH.

In terms of domain architecture, Protein kinase spans 4-284 (YHKMEKIGEG…AKEALKHDYF (281 aa)). ATP contacts are provided by residues 10-18 (IGEGTYGVV) and Lys32. Residue Thr14 is modified to Phosphothreonine. Tyr15 is modified (phosphotyrosine). Asp125 acts as the Proton acceptor in catalysis. The residue at position 158 (Thr158) is a Phosphothreonine.

Belongs to the protein kinase superfamily. CMGC Ser/Thr protein kinase family. CDC2/CDKX subfamily. May form a complex composed of at least the catalytic subunit CRK2 and a cyclin. It depends on Mg(2+) as a cofactor.

It is found in the cytoplasm. The catalysed reaction is L-seryl-[protein] + ATP = O-phospho-L-seryl-[protein] + ADP + H(+). It catalyses the reaction L-threonyl-[protein] + ATP = O-phospho-L-threonyl-[protein] + ADP + H(+). The enzyme catalyses [DNA-directed RNA polymerase] + ATP = phospho-[DNA-directed RNA polymerase] + ADP + H(+). Phosphorylation at Thr-14 or Tyr-15 inactivates the enzyme, while phosphorylation at Thr-158 activates it. Functionally, serine/threonine-protein kinase. Involved in the control of the cell cycle. Required for entry into S-phase and mitosis. Probable component of the kinase complex that phosphorylates the repetitive C-terminus of RNA polymerase II. The sequence is that of Cyclin-dependent kinase 2 homolog from Theileria annulata.